A 95-amino-acid chain; its full sequence is Blastocyst protein 4 (95 aa).

The first 20 residues, 1–20 (MGAVFAIIGGFALDSPILRL), serve as a signal peptide directing secretion.

The protein is Blastocyst protein 4 of Oryctolagus cuniculus (Rabbit).